A 452-amino-acid polypeptide reads, in one-letter code: Putative zinc metalloprotease VC_2253 (452 aa).

His-22 lines the Zn(2+) pocket. The active site involves Glu-23. His-26 contacts Zn(2+). Residues 98-120 (SAIVSAGPIFNFLFAIFAYWLVF) traverse the membrane as a helical segment. The 96-residue stretch at 197-292 (NLRDWNFDPE…QVELTLIPDS (96 aa)) folds into the PDZ domain. A run of 2 helical transmembrane segments spans residues 378–400 (FVYF…LVPL) and 428–447 (MGYR…AIFN).

Belongs to the peptidase M50B family. The cofactor is Zn(2+).

It localises to the cell inner membrane. In Vibrio cholerae serotype O1 (strain ATCC 39315 / El Tor Inaba N16961), this protein is Putative zinc metalloprotease VC_2253.